Consider the following 103-residue polypeptide: Small ribosomal subunit protein uS10 (103 aa).

It belongs to the universal ribosomal protein uS10 family. In terms of assembly, part of the 30S ribosomal subunit.

Involved in the binding of tRNA to the ribosomes. The chain is Small ribosomal subunit protein uS10 from Bordetella petrii (strain ATCC BAA-461 / DSM 12804 / CCUG 43448).